A 276-amino-acid chain; its full sequence is Probable endonuclease 4 (276 aa).

9 residues coordinate Zn(2+): H70, H108, E143, D176, H179, H210, D223, H225, and E255.

The protein belongs to the AP endonuclease 2 family. It depends on Zn(2+) as a cofactor.

It carries out the reaction Endonucleolytic cleavage to 5'-phosphooligonucleotide end-products.. Its function is as follows. Endonuclease IV plays a role in DNA repair. It cleaves phosphodiester bonds at apurinic or apyrimidinic (AP) sites, generating a 3'-hydroxyl group and a 5'-terminal sugar phosphate. The protein is Probable endonuclease 4 of Mesomycoplasma hyopneumoniae (strain J / ATCC 25934 / NCTC 10110) (Mycoplasma hyopneumoniae).